Consider the following 513-residue polypeptide: ATP synthase subunit alpha 1 (513 aa).

Position 169 to 176 (169 to 176 (GDRQTGKT)) interacts with ATP.

It belongs to the ATPase alpha/beta chains family. As to quaternary structure, F-type ATPases have 2 components, CF(1) - the catalytic core - and CF(0) - the membrane proton channel. CF(1) has five subunits: alpha(3), beta(3), gamma(1), delta(1), epsilon(1). CF(0) has three main subunits: a(1), b(2) and c(9-12). The alpha and beta chains form an alternating ring which encloses part of the gamma chain. CF(1) is attached to CF(0) by a central stalk formed by the gamma and epsilon chains, while a peripheral stalk is formed by the delta and b chains.

Its subcellular location is the cell inner membrane. The enzyme catalyses ATP + H2O + 4 H(+)(in) = ADP + phosphate + 5 H(+)(out). Its function is as follows. Produces ATP from ADP in the presence of a proton gradient across the membrane. The alpha chain is a regulatory subunit. The protein is ATP synthase subunit alpha 1 of Vibrio campbellii (strain ATCC BAA-1116).